The chain runs to 433 residues: Inositol hexakisphosphate kinase 1 (433 aa).

The interval Glu100 to Ser160 is disordered. Residues Pro113–His123 are compositionally biased toward basic residues. Over residues Ser139–Thr149 the composition is skewed to polar residues. A compositionally biased stretch (basic and acidic residues) spans Lys150 to Ser160. The residue at position 151 (Ser151) is a Phosphoserine. A substrate-binding site is contributed by Pro220–Gly228. The disordered stretch occupies residues Pro362–Pro383. Positions Pro366–Leu375 are enriched in polar residues.

It belongs to the inositol phosphokinase (IPK) family.

The protein localises to the cytoplasm. The protein resides in the nucleus. It carries out the reaction 1D-myo-inositol hexakisphosphate + ATP = 5-diphospho-1D-myo-inositol 1,2,3,4,6-pentakisphosphate + ADP. The catalysed reaction is 1-diphospho-1D-myo-inositol 2,3,4,5,6-pentakisphosphate + ATP + H(+) = 1,5-bis(diphospho)-1D-myo-inositol 2,3,4,6-tetrakisphosphate + ADP. Functionally, converts inositol hexakisphosphate (InsP6) to diphosphoinositol pentakisphosphate (InsP7/PP-InsP5). Converts 1,3,4,5,6-pentakisphosphate (InsP5) to PP-InsP4. The chain is Inositol hexakisphosphate kinase 1 (Ip6k1) from Rattus norvegicus (Rat).